A 659-amino-acid chain; its full sequence is MDDTSGTEGECSELERAGGWFMVEAIVDRRTGDTVSSDEDEEEDGGEDLVDFIDDRPVGDGQEVAQELLLQQAAADDDVEVQTVKRKFAPSPYFSPVCVHPSIENELSPRLDAIKLGRQTSKAKRRLFELPDSGYGQTQVDTESGPKQVQDICKTSQQDGCQGADEGRGRNVGGNGSQEEERAGGDGEESQTESVQTDTTACGVLAILKASNHKATLLGKFKEQFGLGFNELIRHFKSNKTVCSDWVVCVFGVYCTLAESFKTLIQPQCEYAHIQVLSCQWGMTVLTLVRFKRAKNRETVAKGFSTLLNVPENHMLIEPPKLRSAPAALYWFKTSLSNCSEVFGETPEWIVRQTVVGHALEEAQFSLSEMVQYAYDHDITDESTLAYEYALQADTDANAAAFLASNCQAKYVKDACTMCRHYKRGEQARMNMSEWIKFRGDKIQGDGDWKPIVQYLRYQDVEFIPFLCALKSFLQGIPKKSCIVFYGPADTGKSYFCMSLLKFLGGVVISYANSSSHFWLQPLAEAKIGLLDDATSQCWCYIDTYLRNALDGNQVCIDRKHRALLQLKCPPLLITTNINPLGDERWKYLRSRLQVFTFNNKFPLTTQGEPLYTLNDQNWKSFFQRLWARLNLTDPEDEEDNGNTSEPFRCVPGQNTRTV.

The segment at arginine 30–proline 57 is disordered. Residues serine 36–phenylalanine 52 show a composition bias toward acidic residues. Residues lysine 85–lysine 87 carry the Nuclear localization signal motif. 4 positions are modified to phosphoserine; by host: serine 91, serine 95, serine 108, and serine 121. The Nuclear export signal motif lies at leucine 107 to leucine 116. The segment at glycine 134–valine 195 is disordered. The segment covering tyrosine 135–glycine 160 has biased composition (polar residues). Positions glutamine 196–glutamate 362 are DNA-binding region. The SF3 helicase domain occupies valine 461–leucine 611. An ATP-binding site is contributed by glycine 487–serine 494. Lysine 568 is covalently cross-linked (Glycyl lysine isopeptide (Lys-Gly) (interchain with G-Cter in SUMO)). The disordered stretch occupies residues aspartate 634–valine 659.

It belongs to the papillomaviridae E1 protein family. Can form hexamers. Interacts with E2 protein; this interaction increases E1 DNA binding specificity. Interacts with host DNA polymerase subunit POLA2. Interacts with host single stranded DNA-binding protein RPA1. Interacts with host TOP1; this interaction stimulates the enzymatic activity of TOP1. Phosphorylated. In terms of processing, sumoylated.

The protein resides in the host nucleus. The catalysed reaction is Couples ATP hydrolysis with the unwinding of duplex DNA by translocating in the 3'-5' direction.. The enzyme catalyses ATP + H2O = ADP + phosphate + H(+). ATP-dependent DNA 3'-5' helicase required for initiation of viral DNA replication. It forms a complex with the viral E2 protein. The E1-E2 complex binds to the replication origin which contains binding sites for both proteins. During the initial step, a dimer of E1 interacts with a dimer of protein E2 leading to a complex that binds the viral origin of replication with high specificity. Then, a second dimer of E1 displaces the E2 dimer in an ATP-dependent manner to form the E1 tetramer. Following this, two E1 monomers are added to each half of the site, which results in the formation of two E1 trimers on the viral ori. Subsequently, two hexamers will be created. The double hexamer acts as a bi-directional helicase machinery and unwinds the viral DNA and then recruits the host DNA polymerase to start replication. The polypeptide is Replication protein E1 (Homo sapiens (Human)).